We begin with the raw amino-acid sequence, 526 residues long: Germ cell-less protein-like 2 (526 aa).

Residues 1–85 (MGSSSSRVLG…DKQQPLLNTP (85 aa)) form a disordered region. Residues 49–55 (SHKRKRS) carry the Nuclear localization signal motif. The segment covering 62–77 (CDPDSHREEHEEEGDK) has biased composition (basic and acidic residues). Residues 85 to 91 (PARKKLR) carry the Nuclear localization signal motif. The BTB domain occupies 108 to 178 (SDIKICALGE…LYRDDVLIKP (71 aa)).

Interacts with CUL3. Expressed predominantly in testis.

It is found in the nucleus matrix. It participates in protein modification; protein ubiquitination. Its function is as follows. Possible function in spermatogenesis. Probable substrate-specific adapter of an E3 ubiquitin-protein ligase complex which mediates the ubiquitination and subsequent proteasomal degradation of target proteins. The sequence is that of Germ cell-less protein-like 2 from Homo sapiens (Human).